The primary structure comprises 337 residues: Glyceraldehyde-3-phosphate dehydrogenase (337 aa).

Residues 12-13 (RI), Asp-34, and Lys-79 each bind NAD(+). Residues 150–152 (SCT), Thr-181, 210–211 (TG), and Arg-233 each bind D-glyceraldehyde 3-phosphate. Residue Cys-151 is the Nucleophile of the active site. Residue Asn-315 participates in NAD(+) binding.

The protein belongs to the glyceraldehyde-3-phosphate dehydrogenase family. Homotetramer.

It is found in the cytoplasm. The enzyme catalyses D-glyceraldehyde 3-phosphate + phosphate + NAD(+) = (2R)-3-phospho-glyceroyl phosphate + NADH + H(+). It participates in carbohydrate degradation; glycolysis; pyruvate from D-glyceraldehyde 3-phosphate: step 1/5. The sequence is that of Glyceraldehyde-3-phosphate dehydrogenase (GPD) from Cochliobolus lunatus (Filamentous fungus).